Reading from the N-terminus, the 232-residue chain is Small ribosomal subunit protein uS2 (232 aa).

This sequence belongs to the universal ribosomal protein uS2 family.

In Natranaerobius thermophilus (strain ATCC BAA-1301 / DSM 18059 / JW/NM-WN-LF), this protein is Small ribosomal subunit protein uS2.